A 59-amino-acid polypeptide reads, in one-letter code: Sec-independent protein translocase protein TatA (59 aa).

A helical transmembrane segment spans residues 1–21 (MGRLGLTEILVIVGIVILLFG).

The protein belongs to the TatA/E family. As to quaternary structure, forms a complex with TatC.

It is found in the cell inner membrane. Part of the twin-arginine translocation (Tat) system that transports large folded proteins containing a characteristic twin-arginine motif in their signal peptide across membranes. TatA could form the protein-conducting channel of the Tat system. This chain is Sec-independent protein translocase protein TatA, found in Flavobacterium johnsoniae (strain ATCC 17061 / DSM 2064 / JCM 8514 / BCRC 14874 / CCUG 350202 / NBRC 14942 / NCIMB 11054 / UW101) (Cytophaga johnsonae).